Consider the following 183-residue polypeptide: Crossover junction endodeoxyribonuclease RuvC (183 aa).

Active-site residues include Asp-7, Glu-66, and Asp-138. Mg(2+)-binding residues include Asp-7, Glu-66, and Asp-138.

Belongs to the RuvC family. In terms of assembly, homodimer which binds Holliday junction (HJ) DNA. The HJ becomes 2-fold symmetrical on binding to RuvC with unstacked arms; it has a different conformation from HJ DNA in complex with RuvA. In the full resolvosome a probable DNA-RuvA(4)-RuvB(12)-RuvC(2) complex forms which resolves the HJ. The cofactor is Mg(2+).

The protein localises to the cytoplasm. It catalyses the reaction Endonucleolytic cleavage at a junction such as a reciprocal single-stranded crossover between two homologous DNA duplexes (Holliday junction).. In terms of biological role, the RuvA-RuvB-RuvC complex processes Holliday junction (HJ) DNA during genetic recombination and DNA repair. Endonuclease that resolves HJ intermediates. Cleaves cruciform DNA by making single-stranded nicks across the HJ at symmetrical positions within the homologous arms, yielding a 5'-phosphate and a 3'-hydroxyl group; requires a central core of homology in the junction. The consensus cleavage sequence is 5'-(A/T)TT(C/G)-3'. Cleavage occurs on the 3'-side of the TT dinucleotide at the point of strand exchange. HJ branch migration catalyzed by RuvA-RuvB allows RuvC to scan DNA until it finds its consensus sequence, where it cleaves and resolves the cruciform DNA. The chain is Crossover junction endodeoxyribonuclease RuvC from Burkholderia ambifaria (strain MC40-6).